A 764-amino-acid chain; its full sequence is 5-methyltetrahydropteroyltriglutamate--homocysteine methyltransferase (764 aa).

5-methyltetrahydropteroyltri-L-glutamate contacts are provided by residues 16-19 (RELK) and lysine 117. Residues 442–444 (IGS) and glutamate 495 each bind L-homocysteine. L-methionine-binding positions include 442–444 (IGS) and glutamate 495. 5-methyltetrahydropteroyltri-L-glutamate is bound by residues 526–527 (RC) and tryptophan 572. Aspartate 610 lines the L-homocysteine pocket. Aspartate 610 is an L-methionine binding site. Residue glutamate 616 coordinates 5-methyltetrahydropteroyltri-L-glutamate. Residues histidine 652, cysteine 654, and glutamate 676 each contribute to the Zn(2+) site. Histidine 705 (proton donor) is an active-site residue. A Zn(2+)-binding site is contributed by cysteine 737.

It belongs to the vitamin-B12 independent methionine synthase family. Requires Zn(2+) as cofactor.

It carries out the reaction 5-methyltetrahydropteroyltri-L-glutamate + L-homocysteine = tetrahydropteroyltri-L-glutamate + L-methionine. The protein operates within amino-acid biosynthesis; L-methionine biosynthesis via de novo pathway; L-methionine from L-homocysteine (MetE route): step 1/1. Its function is as follows. Catalyzes the transfer of a methyl group from 5-methyltetrahydrofolate to homocysteine resulting in methionine formation. This Bordetella bronchiseptica (strain ATCC BAA-588 / NCTC 13252 / RB50) (Alcaligenes bronchisepticus) protein is 5-methyltetrahydropteroyltriglutamate--homocysteine methyltransferase.